A 257-amino-acid chain; its full sequence is UPF0246 protein PC1_3665 (257 aa).

Belongs to the UPF0246 family.

The chain is UPF0246 protein PC1_3665 from Pectobacterium carotovorum subsp. carotovorum (strain PC1).